We begin with the raw amino-acid sequence, 581 residues long: Urease subunit alpha (581 aa).

Positions G134 to F581 constitute a Urease domain. 3 residues coordinate Ni(2+): H139, H141, and K222. K222 carries the N6-carboxylysine modification. Position 224 (H224) interacts with substrate. Residues H251 and H277 each coordinate Ni(2+). The active-site Proton donor is the H325. D365 contributes to the Ni(2+) binding site.

It belongs to the metallo-dependent hydrolases superfamily. Urease alpha subunit family. As to quaternary structure, heterotrimer of UreA (gamma), UreB (beta) and UreC (alpha) subunits. Three heterotrimers associate to form the active enzyme. The cofactor is Ni cation. Post-translationally, carboxylation allows a single lysine to coordinate two nickel ions.

It is found in the cytoplasm. It carries out the reaction urea + 2 H2O + H(+) = hydrogencarbonate + 2 NH4(+). It functions in the pathway nitrogen metabolism; urea degradation; CO(2) and NH(3) from urea (urease route): step 1/1. In Albidiferax ferrireducens (strain ATCC BAA-621 / DSM 15236 / T118) (Rhodoferax ferrireducens), this protein is Urease subunit alpha.